A 231-amino-acid polypeptide reads, in one-letter code: MARLTKRQKAIREKIDPAQQYPVAEALGLLRELPGAKFTESVEVAVNLGVDPRKSDQIVRGSTVLPNGTGKTVRVAVFAQGDAAEAAKEAGADIVGMDDLAEQVKGGNLDFDVVVAAPDAMGVVGRLGPILGPRGLMPNPKVGTVTPDVAGAVKNAKAGQVRYRTDKGGIIHCAIGKVDFEVEALQQNLQALITDLQKLKPANSKGVYLKKVAVSTTMGPGLAVDLASLET.

Belongs to the universal ribosomal protein uL1 family. As to quaternary structure, part of the 50S ribosomal subunit.

Binds directly to 23S rRNA. The L1 stalk is quite mobile in the ribosome, and is involved in E site tRNA release. Functionally, protein L1 is also a translational repressor protein, it controls the translation of the L11 operon by binding to its mRNA. The polypeptide is Large ribosomal subunit protein uL1 (Alkalilimnicola ehrlichii (strain ATCC BAA-1101 / DSM 17681 / MLHE-1)).